The following is a 765-amino-acid chain: Proton-coupled zinc antiporter SLC30A5 (765 aa).

Met1 is subject to N-acetylmethionine. Residues 1-32 (MEEKYGGDVLAGPGGGGGLGPVDVPSARLTKY) lie on the Cytoplasmic side of the membrane. Residues 33 to 53 (IVLLCFTKFLKAVGLFESYDL) form a helical membrane-spanning segment. The Lumenal segment spans residues 54–56 (LKA). The helical transmembrane segment at 57 to 77 (VHIVQFIFILKLGTAFFMVLF) threads the bilayer. Topologically, residues 78-98 (QKPFSSGKTITKHQWIKIFKH) are cytoplasmic. The chain crosses the membrane as a helical span at residues 99–119 (AVAGCIISLLWFFGLTLCGPL). A topological domain (lumenal) is located at residue Arg120. Residues 121-141 (TLLLFEHSDIVVISLLSVLFT) form a helical membrane-spanning segment. Residues 142-152 (SSGGGPAKTRG) lie on the Cytoplasmic side of the membrane. The helical transmembrane segment at 153 to 173 (AAFFIIAVICLLLFDNDDLMA) threads the bilayer. Topologically, residues 174-193 (KMAEHPEGHHDSALTHMLYT) are lumenal. A helical membrane pass occupies residues 194 to 214 (AIAFLGVADHKGGVLLLVLAL). Residues 215–238 (CCKVGFHTASRKLSVDVGGAKRLQ) lie on the Cytoplasmic side of the membrane. The chain crosses the membrane as a helical span at residues 239-259 (ALSHLVSVLLLCPWVIVLSVT). At 260 to 267 (TESKVESW) the chain is on the lumenal side. Residues 268–288 (FSLIMPFATVIFFVMILDFYV) traverse the membrane as a helical segment. The Cytoplasmic segment spans residues 289–303 (DSICSVKMEVSKCAR). A helical membrane pass occupies residues 304–324 (YGSFPIFISALLFGNFWTHPI). Residues 325 to 342 (TDQLRAMNKAAHQESTEH) are Lumenal-facing. The helical transmembrane segment at 343–363 (VLSGGVVVSAIFFILSANILS) threads the bilayer. At 364-418 (SPSKRGQKGTLIGYSPEGTPLYNFMGDAFQHSSQSIPRFIKESLKQILEESDSRQ) the chain is on the cytoplasmic side. A helical transmembrane segment spans residues 419–439 (IFYFLCLNLLFTFVELFYGVL). The tract at residues 420–640 (FYFLCLNLLF…ILIFLSVVPL (221 aa)) is mediates homodimerization with SLC30A6. Residues 440 to 448 (TNSLGLISD) lie on the Lumenal side of the membrane. A helical transmembrane segment spans residues 449–469 (GFHMLFDCSALVMGLFAALMS). Positions 451 and 455 each coordinate Zn(2+). The Cytoplasmic portion of the chain corresponds to 470-483 (RWKATRIFSYGYGR). A helical transmembrane segment spans residues 484-504 (IEILSGFINGLFLIVIAFFVF). Over 505–520 (MESVARLIDPPELDTH) the chain is Lumenal. A helical transmembrane segment spans residues 521 to 541 (MLTPVSVGGLIVNLIGICAFS). The interval 542–578 (HAHSHAHGASQGSCHSSDHSHSHHMHGHSDHGHGHSH) is his-rich loop; required for zinc transport. The Cytoplasmic portion of the chain corresponds to 542–592 (HAHSHAHGASQGSCHSSDHSHSHHMHGHSDHGHGHSHGSAGGGMNANMRGV). A disordered region spans residues 551-581 (SQGSCHSSDHSHSHHMHGHSDHGHGHSHGSA). Residues 593–613 (FLHVLADTLGSIGVIVSTVLI) form a helical membrane-spanning segment. Zn(2+) contacts are provided by His595 and Asp599. Over 614-617 (EQFG) the chain is Lumenal. Residues 618–638 (WFIADPLCSLFIAILIFLSVV) traverse the membrane as a helical segment. Residues 639–765 (PLIKDACQVL…KYCKDGTYIM (127 aa)) are Cytoplasmic-facing.

It belongs to the cation diffusion facilitator (CDF) transporter (TC 2.A.4) family. SLC30A subfamily. As to quaternary structure, heterodimer with SLC30A6/ZNT6; form a functional zinc ion transmembrane transporter. Post-translationally, could homodimerize through the formation of dityrosine bonds upon oxidative stress. In terms of tissue distribution, ubiquitously expressed. Highly expressed in pancreas, liver and kidney. Expressed abundantly in insulin-containing beta cells, undetectable in other endocrine cell types including glucagon-secreting alpha cells and most acinar cells (at protein level).

The protein resides in the golgi apparatus. It localises to the golgi stack membrane. It is found in the cytoplasmic vesicle. The protein localises to the COPII-coated vesicle membrane. Its subcellular location is the secretory vesicle membrane. The protein resides in the trans-Golgi network membrane. It localises to the endoplasmic reticulum membrane. It is found in the cell membrane. The protein localises to the apical cell membrane. It catalyses the reaction Zn(2+)(in) + 2 H(+)(out) = Zn(2+)(out) + 2 H(+)(in). Functionally, together with SLC30A6 forms a functional proton-coupled zinc ion antiporter mediating zinc entry into the lumen of organelles along the secretory pathway. By contributing to zinc ion homeostasis within the early secretory pathway, regulates the activation and folding of enzymes like alkaline phosphatases and enzymes involved in phosphatidylinositol glycan anchor biosynthesis. Through the transport of zinc into secretory granules of pancreatic beta-cells, plays an important role in the storage and secretion of insulin. In terms of biological role, zinc ion:proton antiporter mediating influx and efflux of zinc at the plasma membrane. The polypeptide is Proton-coupled zinc antiporter SLC30A5 (Homo sapiens (Human)).